Here is a 213-residue protein sequence, read N- to C-terminus: Sclerostin (213 aa).

Residues 1–28 form the signal peptide; sequence MQLSLAPCLACLLVHAAFVAVESQGWQA. An N-linked (GlcNAc...) asparagine glycan is attached at asparagine 53. 4 disulfide bridges follow: cysteine 80–cysteine 134, cysteine 94–cysteine 148, cysteine 105–cysteine 165, and cysteine 109–cysteine 167. A CTCK domain is found at 82 to 172; the sequence is ELHYTRFVTD…ASCKCKRLTR (91 aa). A glycan (N-linked (GlcNAc...) asparagine) is linked at asparagine 175. A disordered region spans residues 178 to 213; that stretch reads ELKDFGPETARPQKGRKPRPRARGAKANQAELENAY. Positions 190-201 are enriched in basic residues; sequence QKGRKPRPRARG.

It belongs to the sclerostin family. As to quaternary structure, interacts with LRP4 (via the extracellular domain); the interaction facilitates the inhibition of Wnt signaling. Interacts with LRP5 (via the first two YWTD-EGF repeat domains); the interaction inhibits Wnt-mediated signaling. Interacts with LRP6.

The protein resides in the secreted. In terms of biological role, negative regulator of bone growth that acts through inhibition of Wnt signaling and bone formation. The protein is Sclerostin of Rattus norvegicus (Rat).